We begin with the raw amino-acid sequence, 96 residues long: Nucleoid-associated protein CF0672 (96 aa).

The protein belongs to the YbaB/EbfC family. In terms of assembly, homodimer.

The protein localises to the cytoplasm. Its subcellular location is the nucleoid. Its function is as follows. Binds to DNA and alters its conformation. May be involved in regulation of gene expression, nucleoid organization and DNA protection. This chain is Nucleoid-associated protein CF0672, found in Chlamydia felis (strain Fe/C-56) (Chlamydophila felis).